A 345-amino-acid chain; its full sequence is S-adenosylmethionine:tRNA ribosyltransferase-isomerase (345 aa).

It belongs to the QueA family. Monomer.

Its subcellular location is the cytoplasm. The catalysed reaction is 7-aminomethyl-7-carbaguanosine(34) in tRNA + S-adenosyl-L-methionine = epoxyqueuosine(34) in tRNA + adenine + L-methionine + 2 H(+). The protein operates within tRNA modification; tRNA-queuosine biosynthesis. Functionally, transfers and isomerizes the ribose moiety from AdoMet to the 7-aminomethyl group of 7-deazaguanine (preQ1-tRNA) to give epoxyqueuosine (oQ-tRNA). The chain is S-adenosylmethionine:tRNA ribosyltransferase-isomerase from Anaeromyxobacter dehalogenans (strain 2CP-C).